A 906-amino-acid chain; its full sequence is Toll-like receptor 12 (906 aa).

Residues 1 to 21 form the signal peptide; that stretch reads MGRYWLLPGLLLSLPLVTGWS. Residues 22–709 are Extracellular-facing; the sequence is TSNCLVTEGS…DHCPQTLELK (688 aa). Asparagine 59 carries N-linked (GlcNAc...) asparagine glycosylation. LRR repeat units lie at residues 91–114, 115–140, 142–170, 198–222, 224–247, 267–290, 291–314, 316–338, 341–364, 366–388, 389–412, 414–436, 462–484, 485–508, and 510–533; these read FPGLKVLALSLHLTQLLPGALRGL, GQLQSLSFFDSPLRRSLFLPPDAFSD, ISLQRLHISGPCLDKKAGIRLPPGLQWLG, SWTLQKLDLSSNWKLKMASPGSLQG, QVEILDLTRTPLDAVWLKGLGLQK, HFELQGLIVKESKIGSISQEALAS, CHSLKTLGLSSTGLTKLPPGFLTA, PRLQRLELSGNQLQSAVLCMNET, VSGLTTLDLSGNRLRILPPAAFSC, PHLRELLLRYNQLLSLEGYLFQE, LQQLETLKLDGNPLLHLGKNWLAA, PALTTLSLLDTQIRMSPEPGFWG, LTSLELHIASGTTEHWTLSPAIF, PSLETLTISGGGLKLKLGSQNASG, and FPALQKLSLLKNSLDAFCSQGTSN. N-linked (GlcNAc...) asparagine glycosylation occurs at asparagine 336. N-linked (GlcNAc...) asparagine glycosylation occurs at asparagine 505. N-linked (GlcNAc...) asparagine glycosylation occurs at asparagine 552. LRR repeat units lie at residues 562–586 and 591–614; these read LPSLRELKLASLQSITQPRSVQLEE and LPQLQALVLSSTGLKSLSAAAFQR. A helical membrane pass occupies residues 710 to 730; it reads LFLASSALVFMLIALPLLQEA. The Cytoplasmic portion of the chain corresponds to 731 to 906; sequence RNSWIPYLQA…FWTWLRSRLG (176 aa). Positions 759–905 constitute a TIR domain; that stretch reads FLFDVFVSHC…GFWTWLRSRL (147 aa).

The protein belongs to the Toll-like receptor family. Binds MYD88 via their respective TIR domains. As to expression, macrophages, liver, kidney and bladder epithelial cells.

The protein localises to the membrane. Participates in the innate immune response to microbial agents. Acts via MYD88 and TRAF6, leading to NF-kappa-B activation, cytokine secretion and the inflammatory response. Plays a role in preventing infection of internal organs of the urogenital system. The sequence is that of Toll-like receptor 12 from Mus musculus (Mouse).